Here is a 416-residue protein sequence, read N- to C-terminus: MKTACLISTGTELLLGTTNDSNSVFLATRLLERGIKVIGKTVVGDSRETIKMAFASSLGLADMVISSGGLGPTRDDLTKEVACQVMGCEMVINQAEVKRLEDFFARRQRPMPESNLKQALFPAEAEIIFNPLGTAPGMYLKKDNKVLILLPGPPREMEYMFKNEIETRLERDFPQALNRVTRKTIKILGPGESQLEKILDGVIDDSPELSMALLAVDGEIHIKLTADGQDINHSKELMEKACQSIKEALGRNIVGYDNDTLLSVVAACLANTGKKIAVAESCTGGLLAKMITDLSGSSEYFWGSVTSYSNEAKMLYLNVKRETLEQYGAVSPEVAREMAQGMQKQSGTDLALSITGIAGPDGGTKDKPVGLVYICLADGGFLQVKEMHFVGNRESIRILAAKTALDLLRRHLKNGG.

The protein belongs to the CinA family.

This is CinA-like protein from Syntrophomonas wolfei subsp. wolfei (strain DSM 2245B / Goettingen).